Here is a 345-residue protein sequence, read N- to C-terminus: Annexin A9 (345 aa).

Annexin repeat units follow at residues 41–112, 113–184, 197–266, and 270–341; these read FSVD…ALLQ, PTAQ…ALAK, NLAE…GLAS, and NTPL…ALCR.

It belongs to the annexin family. Homodimer. As to expression, expressed in the stratified squamous skin epithelium, but not in epithelia of other types (at protein level).

Low affinity receptor for acetylcholine known to be targeted by disease-causing pemphigus vulgaris antibodies in keratinocytes. The sequence is that of Annexin A9 (ANXA9) from Homo sapiens (Human).